Consider the following 190-residue polypeptide: Ribosome-recycling factor (190 aa).

This sequence belongs to the RRF family.

Its subcellular location is the cytoplasm. In terms of biological role, responsible for the release of ribosomes from messenger RNA at the termination of protein biosynthesis. May increase the efficiency of translation by recycling ribosomes from one round of translation to another. The polypeptide is Ribosome-recycling factor (Fusobacterium nucleatum subsp. nucleatum (strain ATCC 25586 / DSM 15643 / BCRC 10681 / CIP 101130 / JCM 8532 / KCTC 2640 / LMG 13131 / VPI 4355)).